A 137-amino-acid polypeptide reads, in one-letter code: Large ribosomal subunit protein uL22c (137 aa).

The protein belongs to the universal ribosomal protein uL22 family. Part of the 50S ribosomal subunit.

Its subcellular location is the plastid. It is found in the chloroplast. This protein binds specifically to 23S rRNA. Functionally, the globular domain of the protein is located near the polypeptide exit tunnel on the outside of the subunit, while an extended beta-hairpin is found that lines the wall of the exit tunnel in the center of the 70S ribosome. The polypeptide is Large ribosomal subunit protein uL22c (rpl22) (Oenothera argillicola (Appalachian evening primrose)).